The following is a 157-amino-acid chain: Transcription elongation factor GreA (157 aa).

This sequence belongs to the GreA/GreB family.

Its function is as follows. Necessary for efficient RNA polymerase transcription elongation past template-encoded arresting sites. The arresting sites in DNA have the property of trapping a certain fraction of elongating RNA polymerases that pass through, resulting in locked ternary complexes. Cleavage of the nascent transcript by cleavage factors such as GreA or GreB allows the resumption of elongation from the new 3'terminus. GreA releases sequences of 2 to 3 nucleotides. This is Transcription elongation factor GreA from Azorhizobium caulinodans (strain ATCC 43989 / DSM 5975 / JCM 20966 / LMG 6465 / NBRC 14845 / NCIMB 13405 / ORS 571).